Consider the following 252-residue polypeptide: Cell division protein ZapD (252 aa).

This sequence belongs to the ZapD family. In terms of assembly, interacts with FtsZ.

Its subcellular location is the cytoplasm. Functionally, cell division factor that enhances FtsZ-ring assembly. Directly interacts with FtsZ and promotes bundling of FtsZ protofilaments, with a reduction in FtsZ GTPase activity. This is Cell division protein ZapD from Ralstonia pickettii (strain 12J).